The following is a 111-amino-acid chain: Class I hydrophobin SC4 (111 aa).

An N-terminal signal peptide occupies residues 1-25 (MRFSLALLALPALAAAAPVPGGGKG). Disulfide bonds link cysteine 30–cysteine 37, cysteine 38–cysteine 72, cysteine 86–cysteine 92, and cysteine 93–cysteine 106. Asparagine 39 carries N-linked (GlcNAc...) asparagine glycosylation.

This sequence belongs to the fungal hydrophobin family. Self-assembles to form functional amyloid fibrils called rodlets. Self-assembly into fibrillar rodlets occurs spontaneously at hydrophobic:hydrophilic interfaces and the rodlets further associate laterally to form amphipathic monolayers.

The protein localises to the secreted. Its subcellular location is the cell wall. Its function is as follows. Aerial growth, conidiation, and dispersal of filamentous fungi in the environment rely upon a capability of their secreting small amphipathic proteins called hydrophobins (HPBs) with low sequence identity. Class I can self-assemble into an outermost layer of rodlet bundles on aerial cell surfaces, conferring cellular hydrophobicity that supports fungal growth, development and dispersal; whereas Class II form highly ordered films at water-air interfaces through intermolecular interactions but contribute nothing to the rodlet structure. SC4 is a dikaryon-specific class I hydrophobin that contributes to the formation of aerial hyphae and fruiting bodies. Plays a role within fruiting bodies by preventing gas channels filling with water under wet conditions, probably serving uninterrupted gas exchange. SC4 cannot fully substitute for SC3. Involved in the unusual characteristic of mounds to adhere to and completely envelop adjacent fruiting bodies on mosaic colonies. In Schizophyllum commune (Split gill fungus), this protein is Class I hydrophobin SC4.